The primary structure comprises 160 residues: Cytochrome b6-f complex subunit 4 (160 aa).

Helical transmembrane passes span 36 to 56 (LLYM…SLAV), 95 to 115 (LLGV…PFIE), and 131 to 151 (TLFL…ALPI).

This sequence belongs to the cytochrome b family. PetD subfamily. The 4 large subunits of the cytochrome b6-f complex are cytochrome b6, subunit IV (17 kDa polypeptide, petD), cytochrome f and the Rieske protein, while the 4 small subunits are petG, petL, petM and petN. The complex functions as a dimer.

It is found in the plastid. The protein resides in the chloroplast thylakoid membrane. Component of the cytochrome b6-f complex, which mediates electron transfer between photosystem II (PSII) and photosystem I (PSI), cyclic electron flow around PSI, and state transitions. The polypeptide is Cytochrome b6-f complex subunit 4 (Oltmannsiellopsis viridis (Marine flagellate)).